We begin with the raw amino-acid sequence, 545 residues long: MLLLHRAVVLRLQQACRLKSIPSRIYIQACSTNDSFRPQYPSLTFSGDNSSTRGWKVMGTLLGLGAVLAYQDHRCRAAQESTRIYTKEEVSSHTSPETGIWVALGSEVFDVTEFADLHPGGPSKLMLAAGGPLEPFWALYAVHNQSHVRELLAQYKVGELNPEDKVAPTVETSDPYADDPVRHPALKVNSQRPFNAEPPPELLTENYITPNPIFFTRNHLPVPNLDPDTYRLHIVGAPGGQSLSLSLDDLHNFPKYEITVTLQCAGNRRSEMTQVKEVKGLEWRTGAISTARWAGARLCDVLAKAGHQLCETEAHVCFEGLDSDPTGTAYGASIPLARAMDPEAGVLLAYEMNGQPLPRDHGFPVRVVVPGVVGARHVKWLGRVSVQPEESYSHWQRRDYKGFSPSVDWDTVDFDSAPSIQELPVQSAITEPRDGETVESGEVTIKGYAWSGGGRAVIRVDVSLDGGLTWQVAKLDGEEQRPRKAWAWRLWQLQAPVPAGQKELNIVCKAVDDGYNVQPDTVAPIWNLRGVLSNAWHRVHVFVAP.

The transit peptide at 1 to 79 directs the protein to the mitochondrion; it reads MLLLHRAVVL…YQDHRCRAAQ (79 aa). Residues 82–161 form the Cytochrome b5 heme-binding domain; it reads TRIYTKEEVS…LAQYKVGELN (80 aa). His-118 contacts heme b. At Ser-123 the chain carries Phosphoserine. Residues His-143, Gln-145, and His-147 each coordinate heme b. The segment at 165-174 is hinge; the sequence is KVAPTVETSD. Positions 175-401 are moco domain; the sequence is PYADDPVRHP…YSHWQRRDYK (227 aa). Residues 215–219, Cys-264, Asp-322, His-361, Arg-366, and 377–379 contribute to the Mo-molybdopterin site; these read FTRNH and HVK. Residues 402 to 538 form a homodimerization region; sequence GFSPSVDWDT…RGVLSNAWHR (137 aa).

As to quaternary structure, homodimer. It depends on heme b as a cofactor. The cofactor is Mo-molybdopterin.

The protein localises to the mitochondrion intermembrane space. The catalysed reaction is sulfite + O2 + H2O = sulfate + H2O2. It participates in energy metabolism; sulfur metabolism. Functionally, catalyzes the oxidation of sulfite to sulfate, the terminal reaction in the oxidative degradation of sulfur-containing amino acids. In Macaca fascicularis (Crab-eating macaque), this protein is Sulfite oxidase, mitochondrial (SUOX).